The following is a 107-amino-acid chain: Large ribosomal subunit protein P2 (107 aa).

Positions 86 to 107 are disordered; it reads PAAAAAEAEEEDDDDMGFGLFD. Acidic residues predominate over residues 92–101; the sequence is EAEEEDDDDM.

This sequence belongs to the eukaryotic ribosomal protein P1/P2 family. As to quaternary structure, P1 and P2 exist as dimers at the large ribosomal subunit. In terms of processing, phosphorylated.

In terms of biological role, plays an important role in the elongation step of protein synthesis. The sequence is that of Large ribosomal subunit protein P2 from Trypanosoma brucei brucei.